A 767-amino-acid polypeptide reads, in one-letter code: Dipeptidyl peptidase 4 (767 aa).

At 1–6 the chain is on the cytoplasmic side; sequence MKTPWK. Residues 7–28 form a helical; Signal-anchor for type II membrane protein membrane-spanning segment; that stretch reads VLLGLLGVAALVTIITVPVVLL. The Extracellular portion of the chain corresponds to 29-767; sequence NKDEAAADSR…HFLQQCFSLR (739 aa). Residues Asn83, Asn90, Asn148, Asn217, Asn227, and Asn319 are each glycosylated (N-linked (GlcNAc...) asparagine). Intrachain disulfides connect Cys326-Cys337, Cys383-Cys395, Cys445-Cys448, and Cys455-Cys473. Asn521 carries an N-linked (GlcNAc...) asparagine glycan. The active-site Charge relay system is the Ser631. Cys650 and Cys763 are joined by a disulfide. The N-linked (GlcNAc...) asparagine glycan is linked to Asn686. Residues Asp709 and His741 each act as charge relay system in the active site.

The protein belongs to the peptidase S9B family. DPPIV subfamily. Monomer. Homodimer. Heterodimer with Seprase (FAP). Requires homodimerization for optimal dipeptidyl peptidase activity and T-cell costimulation. Found in a membrane raft complex, at least composed of BCL10, CARD11, DPP4 and IKBKB. Associates with collagen. Interacts with PTPRC; the interaction is enhanced in an interleukin-12-dependent manner in activated lymphocytes. Interacts (via extracellular domain) with ADA; does not inhibit its dipeptidyl peptidase activity. Interacts with CAV1 (via the N-terminus); the interaction is direct. Interacts (via cytoplasmic tail) with CARD11 (via PDZ domain); its homodimerization is necessary for interaction with CARD11. Interacts with IGF2R; the interaction is direct. Interacts with GPC3. Post-translationally, the soluble form (Dipeptidyl peptidase 4 soluble form also named SDPP) derives from the membrane form (Dipeptidyl peptidase 4 membrane form also named MDPP) by proteolytic processing. In terms of processing, N- and O-Glycosylated. Phosphorylated. Mannose 6-phosphate residues in the carbohydrate moiety are necessary for interaction with IGF2R in activated T-cells. Mannose 6-phosphorylation is induced during T-cell activation. In terms of tissue distribution, expressed in bile ducts and other epithelial brush borders (small intestine, kidney, colon, pancreatic duct); acinar structures in salivary glands; endothelial structures and T cell areas in thymus, spleen and lymph node.

It localises to the secreted. The protein localises to the cell membrane. It is found in the apical cell membrane. The protein resides in the cell projection. Its subcellular location is the invadopodium membrane. It localises to the lamellipodium membrane. The protein localises to the cell junction. It is found in the membrane raft. It carries out the reaction Release of an N-terminal dipeptide, Xaa-Yaa-|-Zaa-, from a polypeptide, preferentially when Yaa is Pro, provided Zaa is neither Pro nor hydroxyproline.. Its activity is regulated as follows. Inhibited by GPC3 and diprotin A. Functionally, cell surface glycoprotein receptor involved in the costimulatory signal essential for T-cell receptor (TCR)-mediated T-cell activation. Acts as a positive regulator of T-cell coactivation, by binding at least ADA, CAV1, IGF2R, and PTPRC. Its binding to CAV1 and CARD11 induces T-cell proliferation and NF-kappa-B activation in a T-cell receptor/CD3-dependent manner. Its interaction with ADA also regulates lymphocyte-epithelial cell adhesion. In association with FAP is involved in the pericellular proteolysis of the extracellular matrix (ECM), the migration and invasion of endothelial cells into the ECM. May be involved in the promotion of lymphatic endothelial cells adhesion, migration and tube formation. When overexpressed, enhanced cell proliferation, a process inhibited by GPC3. Also acts as a serine exopeptidase with a dipeptidyl peptidase activity that regulates various physiological processes by cleaving peptides in the circulation, including many chemokines, mitogenic growth factors, neuropeptides and peptide hormones. Removes N-terminal dipeptides sequentially from polypeptides having unsubstituted N-termini provided that the penultimate residue is proline. The sequence is that of Dipeptidyl peptidase 4 (Dpp4) from Rattus norvegicus (Rat).